We begin with the raw amino-acid sequence, 526 residues long: tRNA modification GTPase MSS1, mitochondrial (526 aa).

The N-terminal 19 residues, Met-1–Arg-19, are a transit peptide targeting the mitochondrion. Residues Gly-274–Glu-444 enclose the TrmE-type G domain. Residues Gly-281–Ser-288, Asp-328–Ile-332, and Asn-394–Asp-397 each bind GTP.

The protein belongs to the TRAFAC class TrmE-Era-EngA-EngB-Septin-like GTPase superfamily. TrmE GTPase family. As to quaternary structure, forms a heterodimer with MTO1.

The protein resides in the mitochondrion. GTPase involved in the 5-carboxymethylaminomethyl modification (mnm(5)s(2)U34) of the wobble uridine base in mitochondrial tRNAs. Involved in the expression of cytochrome c oxidase subunit 1 (COX1). Works in association with the small subunit of mitoribosomes. This Saccharomyces cerevisiae (strain ATCC 204508 / S288c) (Baker's yeast) protein is tRNA modification GTPase MSS1, mitochondrial (MSS1).